The following is a 385-amino-acid chain: Glucans biosynthesis protein C (385 aa).

10 helical membrane passes run 17–37 (AWLMLLGIPFHISLIYSSHTW), 60–80 (MQVFFVISGYFSYMLFLRYPL), 91–111 (VGIPMLTAIPLLTLPQFIMLQ), 137–157 (ISHLWFLLVLVVMTTLCVWIF), 173–193 (KFSMVKLSVIFLCLGIGYAVI), 212–232 (FIVMQTLFYLPFFILGALAFI), 239–259 (LFTTPSRGCTLAAALAFVAYL), 274–294 (TESVITMVLGLWMVNVVFSFG), 311–331 (ASLFIYLVHHPLTLFFGAYIT), and 338–358 (WLGFLCGLIFVVGIAIILYEI).

The protein belongs to the acyltransferase 3 family. OpgC subfamily.

The protein localises to the cell membrane. The protein operates within glycan metabolism; osmoregulated periplasmic glucan (OPG) biosynthesis. In terms of biological role, necessary for the succinyl substitution of periplasmic glucans. Could catalyze the transfer of succinyl residues from the cytoplasmic side of the membrane to the nascent glucan backbones on the periplasmic side of the membrane. This chain is Glucans biosynthesis protein C, found in Escherichia coli (strain SMS-3-5 / SECEC).